Here is a 429-residue protein sequence, read N- to C-terminus: Ribosomal RNA small subunit methyltransferase B (429 aa).

S-adenosyl-L-methionine-binding positions include 254-260 (CAAPGGK), aspartate 277, aspartate 303, and aspartate 322. Cysteine 375 acts as the Nucleophile in catalysis.

Belongs to the class I-like SAM-binding methyltransferase superfamily. RsmB/NOP family.

The protein resides in the cytoplasm. It catalyses the reaction cytidine(967) in 16S rRNA + S-adenosyl-L-methionine = 5-methylcytidine(967) in 16S rRNA + S-adenosyl-L-homocysteine + H(+). Functionally, specifically methylates the cytosine at position 967 (m5C967) of 16S rRNA. The protein is Ribosomal RNA small subunit methyltransferase B of Escherichia coli (strain SE11).